Consider the following 199-residue polypeptide: Elongation factor Ts (199 aa).

The involved in Mg(2+) ion dislocation from EF-Tu stretch occupies residues 81 to 84; it reads TDFV.

This sequence belongs to the EF-Ts family.

It is found in the cytoplasm. Functionally, associates with the EF-Tu.GDP complex and induces the exchange of GDP to GTP. It remains bound to the aminoacyl-tRNA.EF-Tu.GTP complex up to the GTP hydrolysis stage on the ribosome. This chain is Elongation factor Ts, found in Thermotoga petrophila (strain ATCC BAA-488 / DSM 13995 / JCM 10881 / RKU-1).